A 153-amino-acid polypeptide reads, in one-letter code: MIKIDVVSECTLWSKKIKRNKTFFNSILKFFPKKYKFIGKKINLTILLSNNKNIKKLNKDFRNKNKPTDVLSFPFEKKFNPKKSNYLGDIVISYEFMNKPKNISILEFKQKVVKIFIHGFLHLLGHDHIKLKDFKKMIKEEDLIYKFIKTKVA.

Zn(2+) is bound by residues histidine 118, histidine 122, and histidine 128.

It belongs to the endoribonuclease YbeY family. Zn(2+) serves as cofactor.

The protein localises to the cytoplasm. Functionally, single strand-specific metallo-endoribonuclease involved in late-stage 70S ribosome quality control and in maturation of the 3' terminus of the 16S rRNA. The protein is Endoribonuclease YbeY of Pelagibacter ubique (strain HTCC1062).